A 1379-amino-acid chain; its full sequence is Vascular endothelial growth factor receptor 3 (1379 aa).

The signal sequence occupies residues 1–19 (MKRVCTLPLWLWLGIVSEA). Residues 20–788 (DLVSSYSMTP…EGSDDKTNVE (769 aa)) lie on the Extracellular side of the membrane. Ig-like C2-type domains lie at 30–136 (PTLS…TAVS), 160–222 (KENT…IDNK), 240–335 (DIQL…TDVI), 340–421 (PFIN…KRIS), 430–566 (PRIH…FYVT), 569–684 (PDGF…KYIS), and 691–777 (PRLK…ASVS). Disulfide bonds link C51/C120 and C167/C215. The segment at 73–93 (RRWNSQPQQRPVGAGNPEEDC) is disordered. N-linked (GlcNAc...) asparagine glycosylation is found at N113, N175, N260, and N308. C261 and C319 are disulfide-bonded. 3 disulfide bridges follow: C453-C548, C474-C500, and C592-C666. N529, N541, N596, N608, N655, N696, and N703 each carry an N-linked (GlcNAc...) asparagine glycan. A disulfide bridge links C712 with C761. A glycan (N-linked (GlcNAc...) asparagine) is linked at N771. A helical transmembrane segment spans residues 789–809 (IVILIGTGVIAVFFWILLIII). The Cytoplasmic segment spans residues 810 to 1379 (FCNIKRPAHA…LHASFFSEQY (570 aa)). In terms of domain architecture, Protein kinase spans 858–1185 (LRLGKVLGHG…DLVEILGNLL (328 aa)). Residues 864–872 (LGHGAFGKV) and K892 contribute to the ATP site. D1049 acts as the Proton acceptor in catalysis. A phosphotyrosine; by autocatalysis mark is found at Y1075 and Y1080. Positions 1196 to 1224 (YIPLNDSHSSEDDGFSQVPSSAQQNSDEE) are disordered. 5 positions are modified to phosphotyrosine; by autocatalysis: Y1239, Y1240, Y1274, Y1342, and Y1346. The disordered stretch occupies residues 1299 to 1379 (RHRKEGGFSS…LHASFFSEQY (81 aa)). Positions 1332-1343 (YGSQVGGQTFYN) are enriched in polar residues.

The protein belongs to the protein kinase superfamily. Tyr protein kinase family. CSF-1/PDGF receptor subfamily. In terms of assembly, interacts with VEGFC and VEGFD. Monomer in the absence of bound VEGFC or VEGFD. Homodimer in the presence of bound VEGFC or VEGFD. Post-translationally, autophosphorylated on tyrosine residues upon ligand binding. Autophosphorylation occurs in trans, i.e. one subunit of the dimeric receptor phosphorylates tyrosine residues on the other subunit.

It localises to the cell membrane. Its subcellular location is the cytoplasm. It is found in the nucleus. It catalyses the reaction L-tyrosyl-[protein] + ATP = O-phospho-L-tyrosyl-[protein] + ADP + H(+). With respect to regulation, present in an inactive conformation in the absence of bound ligand. Binding of VEGFC or VEGFD leads to dimerization and activation by autophosphorylation on tyrosine residues. Tyrosine-protein kinase that acts as a cell-surface receptor for VEGFC and VEGFD, and plays an essential role in lymphangiogenesis and in the development of the vascular network and the cardiovascular system during embryonic development. Promotes proliferation, survival and migration of endothelial cells, and regulates angiogenic sprouting. Mediates activation of the MAPK1/ERK2, MAPK3/ERK1 signaling pathway, of MAPK8 and the JUN signaling pathway, and of the AKT1 signaling pathway. The chain is Vascular endothelial growth factor receptor 3 (FLT4) from Coturnix coturnix (Common quail).